Here is a 596-residue protein sequence, read N- to C-terminus: Arginine--tRNA ligase (596 aa).

The short motif at 127-137 (ANPTGPVHVGR) is the 'HIGH' region element.

It belongs to the class-I aminoacyl-tRNA synthetase family.

It is found in the cytoplasm. It carries out the reaction tRNA(Arg) + L-arginine + ATP = L-arginyl-tRNA(Arg) + AMP + diphosphate. The polypeptide is Arginine--tRNA ligase (Haloquadratum walsbyi (strain DSM 16790 / HBSQ001)).